Consider the following 392-residue polypeptide: Succinate--CoA ligase [ADP-forming] subunit beta (392 aa).

Residues 9–236 (RDLFERHGLP…QAAVDPLEQA (228 aa)) form the ATP-grasp domain. ATP is bound by residues lysine 45, 52 to 54 (GRG), alanine 94, and glutamate 99. Mg(2+)-binding residues include asparagine 191 and aspartate 205. Substrate-binding positions include asparagine 256 and 318 to 320 (GIT).

The protein belongs to the succinate/malate CoA ligase beta subunit family. Heterotetramer of two alpha and two beta subunits. The cofactor is Mg(2+).

The catalysed reaction is succinate + ATP + CoA = succinyl-CoA + ADP + phosphate. It carries out the reaction GTP + succinate + CoA = succinyl-CoA + GDP + phosphate. It functions in the pathway carbohydrate metabolism; tricarboxylic acid cycle; succinate from succinyl-CoA (ligase route): step 1/1. Succinyl-CoA synthetase functions in the citric acid cycle (TCA), coupling the hydrolysis of succinyl-CoA to the synthesis of either ATP or GTP and thus represents the only step of substrate-level phosphorylation in the TCA. The beta subunit provides nucleotide specificity of the enzyme and binds the substrate succinate, while the binding sites for coenzyme A and phosphate are found in the alpha subunit. In Salinispora arenicola (strain CNS-205), this protein is Succinate--CoA ligase [ADP-forming] subunit beta.